Here is a 319-residue protein sequence, read N- to C-terminus: Ribose-phosphate pyrophosphokinase (319 aa).

ATP is bound by residues 40–42 (DGE) and 99–100 (RQ). 2 residues coordinate Mg(2+): His134 and Asp174. The active site involves Lys198. D-ribose 5-phosphate is bound by residues Arg200, Asp224, and 228–232 (DTAGT).

This sequence belongs to the ribose-phosphate pyrophosphokinase family. Class I subfamily. Homohexamer. It depends on Mg(2+) as a cofactor.

It localises to the cytoplasm. It carries out the reaction D-ribose 5-phosphate + ATP = 5-phospho-alpha-D-ribose 1-diphosphate + AMP + H(+). Its pathway is metabolic intermediate biosynthesis; 5-phospho-alpha-D-ribose 1-diphosphate biosynthesis; 5-phospho-alpha-D-ribose 1-diphosphate from D-ribose 5-phosphate (route I): step 1/1. Involved in the biosynthesis of the central metabolite phospho-alpha-D-ribosyl-1-pyrophosphate (PRPP) via the transfer of pyrophosphoryl group from ATP to 1-hydroxyl of ribose-5-phosphate (Rib-5-P). The protein is Ribose-phosphate pyrophosphokinase of Coxiella burnetii (strain RSA 493 / Nine Mile phase I).